Reading from the N-terminus, the 379-residue chain is 2-dehydropantoate 2-reductase (379 aa).

NADP(+)-binding positions include 13-18 and Asn-119; that span reads GLGAMG. Asn-119 lines the substrate pocket. Lys-224 acts as the Proton donor in catalysis. Positions 228, 232, and 316 each coordinate substrate. Glu-328 serves as a coordination point for NADP(+).

It belongs to the ketopantoate reductase family.

It carries out the reaction (R)-pantoate + NADP(+) = 2-dehydropantoate + NADPH + H(+). It functions in the pathway cofactor biosynthesis; (R)-pantothenate biosynthesis; (R)-pantoate from 3-methyl-2-oxobutanoate: step 2/2. In terms of biological role, catalyzes the NADPH-dependent reduction of ketopantoate into pantoic acid. The sequence is that of 2-dehydropantoate 2-reductase (PAN5) from Saccharomyces cerevisiae (strain ATCC 204508 / S288c) (Baker's yeast).